Reading from the N-terminus, the 197-residue chain is Dephospho-CoA kinase (197 aa).

The region spanning 2 to 197 is the DPCK domain; the sequence is IIGLTGGIAS…GAIKDLANLV (196 aa). Residue 10-15 participates in ATP binding; that stretch reads ASGKST.

It belongs to the CoaE family.

The protein resides in the cytoplasm. The catalysed reaction is 3'-dephospho-CoA + ATP = ADP + CoA + H(+). It participates in cofactor biosynthesis; coenzyme A biosynthesis; CoA from (R)-pantothenate: step 5/5. Functionally, catalyzes the phosphorylation of the 3'-hydroxyl group of dephosphocoenzyme A to form coenzyme A. This chain is Dephospho-CoA kinase, found in Streptococcus thermophilus (strain ATCC BAA-250 / LMG 18311).